Consider the following 375-residue polypeptide: Methylthioribose-1-phosphate isomerase (375 aa).

Asp-257 functions as the Proton donor in the catalytic mechanism.

The protein belongs to the eIF-2B alpha/beta/delta subunits family. MtnA subfamily.

It localises to the cytoplasm. It is found in the nucleus. It carries out the reaction 5-(methylsulfanyl)-alpha-D-ribose 1-phosphate = 5-(methylsulfanyl)-D-ribulose 1-phosphate. It functions in the pathway amino-acid biosynthesis; L-methionine biosynthesis via salvage pathway; L-methionine from S-methyl-5-thio-alpha-D-ribose 1-phosphate: step 1/6. In terms of biological role, catalyzes the interconversion of methylthioribose-1-phosphate (MTR-1-P) into methylthioribulose-1-phosphate (MTRu-1-P). The protein is Methylthioribose-1-phosphate isomerase of Leishmania major.